The following is an 894-amino-acid chain: Glutamate receptor 3 (894 aa).

Positions 1 to 28 (MARQKKMGQSVLRAVFFLVLGLLGHSHG) are cleaved as a signal peptide. The Extracellular portion of the chain corresponds to 29–552 (GFPNTISIGG…GVFSFLDPLA (524 aa)). N-linked (GlcNAc...) asparagine glycans are attached at residues N63, N266, N380, N415, and N422. A disulfide bridge connects residues C91 and C340. The L-glutamate site is built by P508, T510, and R515. A helical transmembrane segment spans residues 553 to 573 (YEIWMCIVFAYIGVSVVLFLV). The Cytoplasmic portion of the chain corresponds to 574 to 602 (SRFSPYEWHLEDNNEEPRDPQSPPDPPNE). The segment at residues 603 to 618 (FGIFNSLWFSLGAFMQ) is an intramembrane region (helical; Pore-forming). The stretch at 619–621 (QGC) is an intramembrane region. C621 carries S-palmitoyl cysteine lipidation. Topologically, residues 622–627 (DISPRS) are cytoplasmic. Residues 628–648 (LSGRIVGGVWWFFTLIIISSY) form a helical membrane-spanning segment. Residues 649 to 823 (TANLAAFLTV…DKTSALSLSN (175 aa)) lie on the Extracellular side of the membrane. The L-glutamate site is built by S686, T687, and E737. A disulfide bond links C750 and C805. The chain crosses the membrane as a helical span at residues 824 to 844 (VAGVFYILVGGLGLAMMVALI). Residues 845-894 (EFCYKSRAESKRMKLTKNTQNFKPAPATNTQNYATYREGYNVYGTESVKI) lie on the Cytoplasmic side of the membrane. The S-palmitoyl cysteine moiety is linked to residue C847. 2 positions are modified to phosphotyrosine: Y877 and Y887.

This sequence belongs to the glutamate-gated ion channel (TC 1.A.10.1) family. GRIA3 subfamily. In terms of assembly, homotetramer or heterotetramer of pore-forming glutamate receptor subunits. Tetramers may be formed by the dimerization of dimers. Interacts with PICK1, GRIP1 and GRIP2. Found in a complex with GRIA1, GRIA2, GRIA4, CNIH2, CNIH3, CACNG2, CACNG3, CACNG4, CACNG5, CACNG7 and CACNG8. Interacts with CACNG5. Found in a complex with GRIA1, GRIA2, GRIA4, DLG4, CACNG8 and CNIH2.

It localises to the cell membrane. The protein localises to the postsynaptic cell membrane. Its subcellular location is the postsynaptic density membrane. The catalysed reaction is Ca(2+)(in) = Ca(2+)(out). In terms of biological role, ionotropic glutamate receptor that functions as a ligand-gated cation channel, gated by L-glutamate and glutamatergic agonists such as alpha-amino-3-hydroxy-5-methyl-4-isoxazolepropionic acid (AMPA), quisqualic acid, and kainic acid. L-glutamate acts as an excitatory neurotransmitter at many synapses in the central nervous system and plays an important role in fast excitatory synaptic transmission by inducing long-term potentiation. Binding of the excitatory neurotransmitter L-glutamate induces a conformation change, leading to the opening of the cation channel, and thereby converts the chemical signal to an electrical impulse upon entry of calcium. The receptor then desensitizes rapidly and enters a transient inactive state, characterized by the presence of bound agonist. In the presence of CACNG8, shows resensitization which is characterized by a delayed accumulation of current flux upon continued application of glutamate. This chain is Glutamate receptor 3, found in Homo sapiens (Human).